We begin with the raw amino-acid sequence, 564 residues long: Plant UBX domain-containing protein 8 (564 aa).

The residue at position 2 (Ala2) is an N-acetylalanine. One can recognise a UBA-like domain in the interval Ala2–Glu44. UIM domains follow at residues Ile198–Ser217 and Glu230–Glu249. The segment at Ser210–Met229 is disordered. Disordered stretches follow at residues Ala267–Asp358, Ile371–Met423, and Phe443–Glu483. Residues Phe291–Glu300 are compositionally biased toward acidic residues. A phosphoserine mark is found at Ser295, Ser324, Ser326, and Ser328. The span at Asp322–Ala334 shows a compositional bias: basic and acidic residues. Pro residues predominate over residues Phe381–Pro395. Positions Val412–Glu478 form a coiled coil. Over residues Phe443–Leu475 the composition is skewed to basic and acidic residues. Positions Asp482–Phe560 constitute a UBX domain.

In terms of assembly, interacts with RABA5C/ARA-4.

The polypeptide is Plant UBX domain-containing protein 8 (Arabidopsis thaliana (Mouse-ear cress)).